Reading from the N-terminus, the 333-residue chain is Beta-ketoacyl-[acyl-carrier-protein] synthase III (333 aa).

Residues C116 and H258 contribute to the active site. The interval 259–263 (QANQR) is ACP-binding. Residue N288 is part of the active site.

It belongs to the thiolase-like superfamily. FabH family. Homodimer.

The protein resides in the cytoplasm. It carries out the reaction malonyl-[ACP] + acetyl-CoA + H(+) = 3-oxobutanoyl-[ACP] + CO2 + CoA. It participates in lipid metabolism; fatty acid biosynthesis. Its function is as follows. Catalyzes the condensation reaction of fatty acid synthesis by the addition to an acyl acceptor of two carbons from malonyl-ACP. Catalyzes the first condensation reaction which initiates fatty acid synthesis and may therefore play a role in governing the total rate of fatty acid production. Possesses both acetoacetyl-ACP synthase and acetyl transacylase activities. Its substrate specificity determines the biosynthesis of branched-chain and/or straight-chain of fatty acids. The sequence is that of Beta-ketoacyl-[acyl-carrier-protein] synthase III from Microcystis aeruginosa (strain NIES-843 / IAM M-2473).